We begin with the raw amino-acid sequence, 394 residues long: Elongation factor Tu (394 aa).

Positions 10 to 204 (KPHINVGTIG…HLDNYIPEPK (195 aa)) constitute a tr-type G domain. Residues 19 to 26 (GHVDHGKT) form a G1 region. Position 19–26 (19–26 (GHVDHGKT)) interacts with GTP. Mg(2+) is bound at residue Thr-26. The tract at residues 60–64 (GITIN) is G2. The interval 81-84 (DCPG) is G3. Residues 81-85 (DCPGH) and 136-139 (NKCD) contribute to the GTP site. A G4 region spans residues 136–139 (NKCD). The interval 174 to 176 (SAL) is G5.

This sequence belongs to the TRAFAC class translation factor GTPase superfamily. Classic translation factor GTPase family. EF-Tu/EF-1A subfamily. Monomer.

The protein resides in the cytoplasm. It carries out the reaction GTP + H2O = GDP + phosphate + H(+). Functionally, GTP hydrolase that promotes the GTP-dependent binding of aminoacyl-tRNA to the A-site of ribosomes during protein biosynthesis. The protein is Elongation factor Tu of Wigglesworthia glossinidia brevipalpis.